Consider the following 145-residue polypeptide: 3-hydroxyacyl-[acyl-carrier-protein] dehydratase FabZ (145 aa).

The active site involves H47.

It belongs to the thioester dehydratase family. FabZ subfamily.

It is found in the cytoplasm. The catalysed reaction is a (3R)-hydroxyacyl-[ACP] = a (2E)-enoyl-[ACP] + H2O. In terms of biological role, involved in unsaturated fatty acids biosynthesis. Catalyzes the dehydration of short chain beta-hydroxyacyl-ACPs and long chain saturated and unsaturated beta-hydroxyacyl-ACPs. The chain is 3-hydroxyacyl-[acyl-carrier-protein] dehydratase FabZ from Aromatoleum aromaticum (strain DSM 19018 / LMG 30748 / EbN1) (Azoarcus sp. (strain EbN1)).